The sequence spans 473 residues: Knob-associated histidine-rich protein (473 aa).

Positions 1-34 are cleaved as a signal peptide; sequence MKSFKNKNTLRRKKAFPVFTKILLVSFLVWVLKC. N-linked (GlcNAc...) asparagine glycosylation occurs at asparagine 42. Residues 57 to 87 are compositionally biased toward basic residues; it reads AQKQHEHHHHHHHQHQHQHQAPHQAHHHHHH. Disordered stretches follow at residues 57–143 and 347–473; these read AQKQ…QVFR and SSVN…DGSK. Positions 95–104 are enriched in low complexity; that stretch reads PQVHQQVHGQ. Positions 108–117 are enriched in basic residues; the sequence is HHHHHHHHHQ. Composition is skewed to basic and acidic residues over residues 354–375 and 396–405; these read KHGD…EGEK and KDNEDAESVK. The segment covering 406 to 422 has biased composition (basic residues); sequence SKKHKSHDCEKKKSKKH. Basic and acidic residues-rich tracts occupy residues 423–444 and 453–473; these read KDNE…GEKH and KTNE…DGSK.

The protein resides in the secreted. Functionally, KAHRP might mimick human histidine-rich glycoproteins to anchor host thrombospondin or a parasite analog in a binding complex with the endothelial cell receptor. In Plasmodium falciparum, this protein is Knob-associated histidine-rich protein.